A 169-amino-acid chain; its full sequence is Lipoprotein signal peptidase (169 aa).

The next 3 membrane-spanning stretches (helical) occupy residues 1-21, 68-88, and 94-114; these read MPES…LILV, WQRW…VVWL, and HETL…GNLY. Catalysis depends on residues aspartate 124 and aspartate 143. The chain crosses the membrane as a helical span at residues 135–155; that stretch reads FFPAFNLADTFITIGAILLAL.

Belongs to the peptidase A8 family.

It localises to the cell inner membrane. It catalyses the reaction Release of signal peptides from bacterial membrane prolipoproteins. Hydrolyzes -Xaa-Yaa-Zaa-|-(S,diacylglyceryl)Cys-, in which Xaa is hydrophobic (preferably Leu), and Yaa (Ala or Ser) and Zaa (Gly or Ala) have small, neutral side chains.. Its pathway is protein modification; lipoprotein biosynthesis (signal peptide cleavage). In terms of biological role, this protein specifically catalyzes the removal of signal peptides from prolipoproteins. This chain is Lipoprotein signal peptidase, found in Ectopseudomonas mendocina (strain ymp) (Pseudomonas mendocina).